A 156-amino-acid polypeptide reads, in one-letter code: MPRRREVPKRNILPDPKFHDKTVAKLINVLMLAGKKSIAESILYGALDIVAQKTNDEAVKVLKKSLDNIKPALEVKSRRVGGSTYQVPIEVRPDRRVSLAMRWLIKYSTLRSEKTMKDKLAGEILDAYNSRGAAVKKREDVHKMAEANRAFAHYRW.

This sequence belongs to the universal ribosomal protein uS7 family. Part of the 30S ribosomal subunit. Contacts proteins S9 and S11.

Its function is as follows. One of the primary rRNA binding proteins, it binds directly to 16S rRNA where it nucleates assembly of the head domain of the 30S subunit. Is located at the subunit interface close to the decoding center, probably blocks exit of the E-site tRNA. The polypeptide is Small ribosomal subunit protein uS7 (Pelobacter propionicus (strain DSM 2379 / NBRC 103807 / OttBd1)).